The chain runs to 550 residues: Transcription factor p65 (550 aa).

Met1 carries the N-acetylmethionine modification. Positions 16–190 (ASGPYVEIIE…HPIFDNRAPN (175 aa)) constitute an RHD domain. Residue Lys37 forms a Glycyl lysine isopeptide (Lys-Gly) (interchain with G-Cter in SUMO3) linkage. Cys38 bears the Cysteine persulfide; alternate mark. Cys38 is modified (S-nitrosocysteine; alternate). Residues Lys122, Lys123, Lys218, and Lys221 each carry the N6-acetyllysine modification. Glycyl lysine isopeptide (Lys-Gly) (interchain with G-Cter in SUMO3); alternate cross-links involve residues Lys122 and Lys123. The residue at position 254 (Thr254) is a Phosphothreonine. Residues Ser276 and Ser281 each carry the phosphoserine modification. The short motif at 301–304 (KRKR) is the Nuclear localization signal element. Lys310 bears the N6-acetyllysine; alternate mark. An N6-methyllysine modification is found at Lys310. A Phosphoserine modification is found at Ser311. Transcriptional activation domain stretches follow at residues 342–388 (PKPA…APVL) and 414–476 (PGPP…EFQQ). Thr434 carries the phosphothreonine modification. The residue at position 468 (Ser468) is a Phosphoserine. Thr505 bears the Phosphothreonine mark. The transcriptional activation domain 2 stretch occupies residues 520–550 (TSGLPNGLSGDEDFSSIADMDFSALLSQISS). The residue at position 535 (Ser535) is a Phosphoserine. The short motif at 535–543 (SIADMDFSA) is the 9aaTAD element.

As to quaternary structure, component of the NF-kappa-B p65-p50 complex. Component of the NF-kappa-B p65-c-Rel complex. Homodimer; component of the NF-kappa-B p65-p65 complex. Component of the NF-kappa-B p65-p52 complex. May interact with ETHE1. Binds TLE5 and TLE1. Interacts with TP53BP2. Binds to and is phosphorylated by the activated form of either RPS6KA4 or RPS6KA5. Interacts with ING4 and this interaction may be indirect. Interacts with CARM1, USP48 and UNC5CL. Interacts with IRAK1BP1. Interacts with NFKBID. Interacts with NFKBIA. Interacts with GSK3B. Interacts with NFKBIB. Interacts with NFKBIE. Interacts with NFKBIZ. Interacts with EHMT1 (via ANK repeats). Part of a 70-90 kDa complex at least consisting of CHUK, IKBKB, NFKBIA, RELA, ELP1 and MAP3K14. Interacts with HDAC3; HDAC3 mediates the deacetylation of RELA. Interacts with HDAC1; the interaction requires non-phosphorylated RELA. Interacts with CBP; the interaction requires phosphorylated RELA. Interacts (phosphorylated at 'Thr-254') with PIN1; the interaction inhibits p65 binding to NFKBIA. Interacts with SOCS1. Interacts with UXT. Interacts with MTDH and PHF11. Interacts with ARRB2. Interacts with NFKBIA (when phosphorylated), the interaction is direct; phosphorylated NFKBIA is part of a SCF(BTRC)-like complex lacking CUL1. Interacts with RNF25. Interacts (via C-terminus) with DDX1. Interacts with UFL1 and COMMD1. Interacts with BRMS1; this promotes deacetylation of 'Lys-310'. Interacts with NOTCH2. Directly interacts with MEN1; this interaction represses NFKB-mediated transactivation. Interacts with AKIP1, which promotes the phosphorylation and nuclear retention of RELA. Interacts (via the RHD) with GFI1; the interaction, after bacterial lipopolysaccharide (LPS) stimulation, inhibits the transcriptional activity by interfering with the DNA-binding activity to target gene promoter DNA. Interacts (when acetylated at Lys-310) with BRD4; leading to activation of the NF-kappa-B pathway. Interacts with MEFV. Interacts with CLOCK. Interacts (via N-terminus) with CPEN1; this interaction induces proteolytic cleavage of p65/RELA subunit and inhibition of NF-kappa-B transcriptional activity. Interacts with FOXP3. Interacts with CDK5RAP3; stimulates the interaction of RELA with HDAC1, HDAC2 and HDAC3 thereby inhibiting NF-kappa-B transcriptional activity. Interacts with DHX9; this interaction is direct and activates NF-kappa-B-mediated transcription. Interacts with LRRC25. Interacts with TBX21. Interacts with KAT2A. Interacts with ZBTB7A; involved in the control by RELA of the accessibility of target gene promoters. Directly interacts with DDX3X; this interaction may trap RELA in the cytoplasm, impairing nuclear relocalization upon TNF activating signals. Interacts with PHF2. Interacts with MKRN2; the interaction leads to its polyubiquitination and proteasome-dependent degradation. Interacts with ECSIT. Interacts with RAB28; the interaction contributes to RELA transport from cytoplasm to nucleus. Ubiquitinated by RNF182, leading to its proteasomal degradation. Degradation is required for termination of NF-kappa-B response. Polyubiquitinated via 'Lys-29'-linked ubiquitin; leading to lysosomal degradation. Post-translationally, monomethylated at Lys-310 by SETD6. Monomethylation at Lys-310 is recognized by the ANK repeats of EHMT1 and promotes the formation of repressed chromatin at target genes, leading to down-regulation of NF-kappa-B transcription factor activity. Phosphorylation at Ser-311 disrupts the interaction with EHMT1 without preventing monomethylation at Lys-310 and relieves the repression of target genes. In terms of processing, phosphorylation at Ser-311 disrupts the interaction with EHMT1 and promotes transcription factor activity. Phosphorylation on Ser-535 stimulates acetylation on Lys-310 and interaction with CBP; the phosphorylated and acetylated forms show enhanced transcriptional activity. Phosphorylation at Ser-276 by RPS6KA4 and RPS6KA5 promotes its transactivation and transcriptional activities. Phosphorylation at Ser-75 by herpes simplex virus 1/HHV-1 inhibits NF-kappa-B activation. Post-translationally, reversibly acetylated; the acetylation seems to be mediated by CBP, the deacetylation by HDAC3 and SIRT2. Acetylation at Lys-122 enhances DNA binding and impairs association with NFKBIA. Acetylation at Lys-310 is required for full transcriptional activity in the absence of effects on DNA binding and NFKBIA association. Acetylation at Lys-310 promotes interaction with BRD4. Acetylation can also lower DNA-binding and results in nuclear export. Interaction with BRMS1 promotes deacetylation of Lys-310. Lys-310 is deacetylated by SIRT2. In terms of processing, S-nitrosylation of Cys-38 inactivates the enzyme activity. Sulfhydration at Cys-38 mediates the anti-apoptotic activity by promoting the interaction with RPS3 and activating the transcription factor activity. Post-translationally, sumoylation by PIAS3 negatively regulates DNA-bound activated NF-kappa-B. In terms of processing, proteolytically cleaved within a conserved N-terminus region required for base-specific contact with DNA in a CPEN1-mediated manner, and hence inhibits NF-kappa-B transcriptional activity.

It is found in the nucleus. The protein localises to the cytoplasm. Functionally, NF-kappa-B is a pleiotropic transcription factor present in almost all cell types and is the endpoint of a series of signal transduction events that are initiated by a vast array of stimuli related to many biological processes such as inflammation, immunity, differentiation, cell growth, tumorigenesis and apoptosis. NF-kappa-B is a homo- or heterodimeric complex formed by the Rel-like domain-containing proteins RELA/p65, RELB, NFKB1/p105, NFKB1/p50, REL and NFKB2/p52. The heterodimeric RELA-NFKB1 complex appears to be most abundant one. The dimers bind at kappa-B sites in the DNA of their target genes and the individual dimers have distinct preferences for different kappa-B sites that they can bind with distinguishable affinity and specificity. Different dimer combinations act as transcriptional activators or repressors, respectively. The NF-kappa-B heterodimeric RELA-NFKB1 and RELA-REL complexes, for instance, function as transcriptional activators. NF-kappa-B is controlled by various mechanisms of post-translational modification and subcellular compartmentalization as well as by interactions with other cofactors or corepressors. NF-kappa-B complexes are held in the cytoplasm in an inactive state complexed with members of the NF-kappa-B inhibitor (I-kappa-B) family. In a conventional activation pathway, I-kappa-B is phosphorylated by I-kappa-B kinases (IKKs) in response to different activators, subsequently degraded thus liberating the active NF-kappa-B complex which translocates to the nucleus. The inhibitory effect of I-kappa-B on NF-kappa-B through retention in the cytoplasm is exerted primarily through the interaction with RELA. RELA shows a weak DNA-binding site which could contribute directly to DNA binding in the NF-kappa-B complex. Besides its activity as a direct transcriptional activator, it is also able to modulate promoters accessibility to transcription factors and thereby indirectly regulate gene expression. Associates with chromatin at the NF-kappa-B promoter region via association with DDX1. Essential for cytokine gene expression in T-cells. The NF-kappa-B homodimeric RELA-RELA complex appears to be involved in invasin-mediated activation of IL-8 expression. Key transcription factor regulating the IFN response during SARS-CoV-2 infection. In Rattus norvegicus (Rat), this protein is Transcription factor p65.